The chain runs to 316 residues: Olfactory receptor 10A7 (316 aa).

At 1-25 (MICENHTRVTEFILLGFTNNPEMQV) the chain is on the extracellular side. N5 is a glycosylation site (N-linked (GlcNAc...) asparagine). Residues 26–46 (SLFIFFLAIYTVTLLGNFLIV) form a helical membrane-spanning segment. Topologically, residues 47–54 (TVTSVDLA) are cytoplasmic. The chain crosses the membrane as a helical span at residues 55-75 (LQTPMYFFLQNLSLLEVCFTL). At 76–99 (VMVPKMLVDLVSPRKIISFVGCGT) the chain is on the extracellular side. A helical transmembrane segment spans residues 100-120 (QMYFFFFFGSSECFLLSMMAY). Over 121–139 (DRFVAICNPLHYSVIMNRS) the chain is Cytoplasmic. Residues 140–160 (LCLWMAIGSWMSGVPVSMLQT) traverse the membrane as a helical segment. Topologically, residues 161-197 (AWMMALPFCGPNAVDHFFCDGPPVLKLVTVDTTMYEM) are extracellular. Residues 198 to 217 (QALASTLLFIMFPFCLILVS) form a helical membrane-spanning segment. At 218 to 237 (YTRIIITILRMSSATGRQKA) the chain is on the cytoplasmic side. A helical transmembrane segment spans residues 238–258 (FSTCSSHLIVVSLFYGTASLT). The Extracellular portion of the chain corresponds to 259 to 271 (YLRPKSNQSPESK). A helical membrane pass occupies residues 272–292 (KLVSLSYTVITPMLNPIIYGL). Over 293 to 316 (RNNEVKGAVKRTITQKVLQKLDVF) the chain is Cytoplasmic.

It belongs to the G-protein coupled receptor 1 family.

The protein localises to the cell membrane. Functionally, odorant receptor. This is Olfactory receptor 10A7 (OR10A7) from Homo sapiens (Human).